A 59-amino-acid polypeptide reads, in one-letter code: UPF0434 protein Sputw3181_2540 (59 aa).

It belongs to the UPF0434 family.

The sequence is that of UPF0434 protein Sputw3181_2540 from Shewanella sp. (strain W3-18-1).